A 392-amino-acid polypeptide reads, in one-letter code: Galactose-1-phosphate uridylyltransferase (392 aa).

Zn(2+)-binding residues include Cys-52 and Cys-55. UDP-alpha-D-glucose is bound by residues Ala-61 and 77 to 78 (ND). His-126 lines the Zn(2+) pocket. Asn-194 is a binding site for UDP-alpha-D-glucose. His-205 serves as a coordination point for Zn(2+). The Tele-UMP-histidine intermediate role is filled by His-207. Gln-209 is a binding site for UDP-alpha-D-glucose. 4 residues coordinate Fe cation: Glu-223, His-323, His-340, and His-342. UDP-alpha-D-glucose-binding positions include 355 to 358 (KFLV) and 360 to 361 (YE).

It belongs to the galactose-1-phosphate uridylyltransferase type 1 family. Homodimer. Zn(2+) serves as cofactor.

It carries out the reaction alpha-D-galactose 1-phosphate + UDP-alpha-D-glucose = alpha-D-glucose 1-phosphate + UDP-alpha-D-galactose. Its pathway is carbohydrate metabolism; galactose metabolism. The chain is Galactose-1-phosphate uridylyltransferase (gal-7) from Neurospora crassa (strain ATCC 24698 / 74-OR23-1A / CBS 708.71 / DSM 1257 / FGSC 987).